The chain runs to 753 residues: Rsm22-cox11 tandem protein 2, mitochondrial (753 aa).

Residues 1 to 39 (MPILTCRYKILFLYNLRNCFTFQNQRCLIPYGTTTTIRW) constitute a mitochondrion transit peptide. [4Fe-4S] cluster-binding residues include Cys-323, Cys-329, Cys-342, and Cys-430. The helical transmembrane segment at 571–591 (IYYLVAISIFALGLTYAAVPL) threads the bilayer. The Mitochondrial intermembrane portion of the chain corresponds to 592–753 (YRLFCSKTGY…TNGNLLTKLN (162 aa)).

The protein in the N-terminal section; belongs to the methyltransferase superfamily. Rsm22 family. In the C-terminal section; belongs to the COX11/CtaG family. In terms of assembly, associates with the mitochondrial ribosome (mitoribosome). Only transiently interacts with the mitoribosome. Post-translationally, specific enzymatic cleavages in vivo by mitochondrial processing peptidase (MPP) yield mature proteins including rsm22-2 and cox11-2.

It is found in the mitochondrion. Its subcellular location is the mitochondrion inner membrane. Its function is as follows. Mitochondrial ribosome (mitoribosome) assembly factor. Binds at the interface of the head and body domains of the mitochondrial small ribosomal subunit (mt-SSU), occluding the mRNA channel and preventing compaction of the head domain towards the body. Probable inactive methyltransferase: retains the characteristic folding and ability to bind S-adenosyl-L-methionine, but it probably lost its methyltransferase activity. Functionally, exerts its effect at some terminal stage of cytochrome c oxidase synthesis, probably by being involved in the insertion of the copper B into subunit I. The protein is Rsm22-cox11 tandem protein 2, mitochondrial (cox1102) of Schizosaccharomyces pombe (strain 972 / ATCC 24843) (Fission yeast).